A 1028-amino-acid polypeptide reads, in one-letter code: Unconventional myosin-Ic-A (1028 aa).

Met-1 is modified (N-acetylmethionine). The Myosin motor domain maps to Gly-12 to Glu-696. An ATP-binding site is contributed by Gly-105–Thr-112. Lys-348 carries the post-translational modification N6-methyllysine. Residues Leu-573–Asp-595 form an actin-binding region. 2 IQ domains span residues Lys-699–Asn-728 and Met-722–Val-751. Residues Lys-850–Arg-1024 enclose the TH1 domain.

The protein belongs to the TRAFAC class myosin-kinesin ATPase superfamily. Myosin family. Interacts (via its IQ motifs) with calmodulin.

It localises to the cytoplasm. The protein localises to the cell membrane. Its subcellular location is the cell projection. It is found in the stereocilium membrane. Functionally, myosins are actin-based motor molecules with ATPase activity. Unconventional myosins serve in intracellular movements. Their highly divergent tails are presumed to bind to membranous compartments, which would be moved relative to actin filaments. Involved in egg activation by coupling dynamic actin to membrane. This is Unconventional myosin-Ic-A (myo1c-a) from Xenopus laevis (African clawed frog).